A 115-amino-acid chain; its full sequence is Non-specific lipid-transfer protein 4.2 (115 aa).

The first 25 residues, 1 to 25 (MARAAATQLVLVAMVAAMLIVATDA), serve as a signal peptide directing secretion. 4 cysteine pairs are disulfide-bonded: Cys-29–Cys-77, Cys-39–Cys-54, Cys-55–Cys-97, and Cys-75–Cys-111.

This sequence belongs to the plant LTP family.

In terms of biological role, plant non-specific lipid-transfer proteins transfer phospholipids as well as galactolipids across membranes. May play a role in wax or cutin deposition in the cell walls of expanding epidermal cells and certain secretory tissues. This Hordeum vulgare (Barley) protein is Non-specific lipid-transfer protein 4.2 (LTP4.2).